Reading from the N-terminus, the 242-residue chain is UDP-2,3-diacylglucosamine hydrolase (242 aa).

Residues Asp-8, His-10, Asp-41, Asn-79, and His-114 each coordinate Mn(2+). 79–80 (NR) is a substrate binding site. Residues Asp-122, Lys-164, Lys-167, and His-195 each contribute to the substrate site. Mn(2+)-binding residues include His-195 and His-197.

The protein belongs to the LpxH family. It depends on Mn(2+) as a cofactor.

The protein resides in the cell inner membrane. The catalysed reaction is UDP-2-N,3-O-bis[(3R)-3-hydroxytetradecanoyl]-alpha-D-glucosamine + H2O = 2-N,3-O-bis[(3R)-3-hydroxytetradecanoyl]-alpha-D-glucosaminyl 1-phosphate + UMP + 2 H(+). Its pathway is glycolipid biosynthesis; lipid IV(A) biosynthesis; lipid IV(A) from (3R)-3-hydroxytetradecanoyl-[acyl-carrier-protein] and UDP-N-acetyl-alpha-D-glucosamine: step 4/6. In terms of biological role, hydrolyzes the pyrophosphate bond of UDP-2,3-diacylglucosamine to yield 2,3-diacylglucosamine 1-phosphate (lipid X) and UMP by catalyzing the attack of water at the alpha-P atom. Involved in the biosynthesis of lipid A, a phosphorylated glycolipid that anchors the lipopolysaccharide to the outer membrane of the cell. The chain is UDP-2,3-diacylglucosamine hydrolase from Vibrio cholerae serotype O1 (strain ATCC 39315 / El Tor Inaba N16961).